Reading from the N-terminus, the 402-residue chain is Type II NADH:quinone oxidoreductase (402 aa).

Residues 12-16, 39-40, and Val83 contribute to the FAD site; these read GAGYA and NK. Glu172 is a catalytic residue. Residues Asp302, 319–320, and Lys379 each bind FAD; that span reads AQ.

Belongs to the NADH dehydrogenase family. In terms of assembly, homodimer in solution. Forms homotetramers; dimer of dimers. FAD serves as cofactor.

Its subcellular location is the cell membrane. The catalysed reaction is a quinone + NADH + H(+) = a quinol + NAD(+). It catalyses the reaction a menaquinone + NADH + H(+) = a menaquinol + NAD(+). The enzyme catalyses a ubiquinone + NADH + H(+) = a ubiquinol + NAD(+). With respect to regulation, inhibited by HQNO, a quinone derivative. Alternative, nonproton pumping NADH:quinone oxidoreductase that delivers electrons to the respiratory chain by oxidation of NADH and reduction of quinones, and contributes to the regeneration of NAD(+). Can use DMN, a menaquinone analog, 2,3-dimethoxy-5,6-dimethyl-benzoquinone (DDB), an ubiquinone analog, or 2,3,5,6-tetramethyl-1,4-benzoquinone (Duroquinone, DQ) a plastoquinone analog as electron acceptors. The chain is Type II NADH:quinone oxidoreductase from Staphylococcus aureus (strain NCTC 8325 / PS 47).